A 326-amino-acid chain; its full sequence is mRNA decay activator protein ZFP36 (326 aa).

A necessary for nuclear export region spans residues 1 to 15 (MDLTAIYESLLSLSP). The interval 1–100 (MDLTAIYESL…PTSPTATSTT (100 aa)) is necessary and sufficient for the association with mRNA decay enzymes and mRNA decay activation. Necessary for localization of ARE-containing mRNAs to processing bodies (PBs) stretches follow at residues 1–174 (MDLT…DLAA) and 100–326 (TPSR…SVSE). A disordered region spans residues 13 to 66 (LSPDVPVPSDHGGTESSPGWGSSGPWSLSPSDSSPSGVTSRLPGRSTSLVEGRS). Residues 28–49 (SSPGWGSSGPWSLSPSDSSPSG) show a composition bias toward low complexity. The residue at position 60 (Ser60) is a Phosphoserine; by MAPKAPK2. Ser66 bears the Phosphoserine mark. Residues 71 to 75 (PPPPG) form a P-P-P-P-G repeat. A disordered region spans residues 78–102 (PLAPRLGPELSPSPTSPTATSTTPS). 2 positions are modified to phosphoserine: Ser88 and Ser90. Thr92 is modified (phosphothreonine). Ser93 is modified (phosphoserine). Residues 95–168 (TATSTTPSRY…GSRCHFIHNP (74 aa)) form a necessary for nuclear localization region. Residues 97–173 (TSTTPSRYKT…FIHNPSEDLA (77 aa)) are necessary for RNA-binding. 2 consecutive C3H1-type zinc fingers follow at residues 103-131 (RYKT…HGLG) and 141-169 (KYKT…HNPS). Positions 103–194 (RYKTELCRTF…ISFSGLPSGR (92 aa)) are necessary for interaction with PABPN1. A Phosphoserine modification is found at Ser169. The necessary for mRNA decay activation stretch occupies residues 174–326 (APGHPPVLRQ…PIFNRISVSE (153 aa)). Disordered regions lie at residues 175-245 (PGHP…RRDP) and 273-292 (SVQS…SSLG). A Phosphoserine; by MAPKAPK2 modification is found at Ser186. A Phosphoserine modification is found at Ser197. A P-P-P-P-G repeat occupies 198 to 202 (PPPPG). The span at 204 to 216 (AGPSLSSSSFSPS) shows a compositional bias: low complexity. Phosphoserine is present on Ser218. The stretch at 219–223 (PPPPG) is one P-P-P-P-G repeat. The residue at position 228 (Ser228) is a Phosphoserine; by MAPK1; in vitro. A phosphoserine mark is found at Ser276, Ser296, and Ser323. The interval 312-326 (APRRLPIFNRISVSE) is interaction with CNOT1.

In terms of assembly, associates with cytoplasmic CCR4-NOT and PAN2-PAN3 deadenylase complexes to trigger ARE-containing mRNA deadenylation and decay processes. Part of a mRNA decay activation complex at least composed of poly(A)-specific exoribonucleases CNOT6, EXOSC2 and XRN1 and mRNA-decapping enzymes DCP1A and DCP2. Associates with the RNA exosome complex. Interacts (via phosphorylated form) with 14-3-3 proteins; these interactions promote exclusion of ZFP36 from cytoplasmic stress granules in response to arsenite treatment in a MAPKAPK2-dependent manner and does not prevent CCR4-NOT deadenylase complex recruitment or ZFP36-induced ARE-containing mRNA deadenylation and decay processes. Interacts with 14-3-3 proteins; these interactions occur in response to rapamycin in an Akt-dependent manner. Interacts with AGO2 and AGO4. Interacts (via C-terminus) with CNOT1; this interaction occurs in a RNA-independent manner and induces mRNA deadenylation. Interacts (via N-terminus) with CNOT6. Interacts with CNOT6L. Interacts (via C-terminus) with CNOT7; this interaction occurs in a RNA-independent manner, induces mRNA deadenylation and is inhibited in a phosphorylation MAPKAPK2-dependent manner. Interacts (via unphosphorylated form) with CNOT8; this interaction occurs in a RNA-independent manner and is inhibited in a phosphorylation MAPKAPK2-dependent manner. Interacts with DCP1A. Interacts (via N-terminus) with DCP2. Interacts with EDC3. Interacts (via N-terminus) with EXOSC2. Interacts with heat shock 70 kDa proteins. Interacts with KHSRP; this interaction increases upon cytokine-induced treatment. Interacts with MAP3K4; this interaction enhances the association with SH3KBP1/CIN85. Interacts with MAPKAPK2; this interaction occurs upon skeletal muscle satellite cell activation. Interacts with NCL. Interacts with NUP214; this interaction increases upon lipopolysaccharide (LPS) stimulation. Interacts with PABPC1; this interaction occurs in a RNA-dependent manner. Interacts (via hypophosphorylated form) with PABPN1 (via RRM domain and C-terminal arginine-rich region); this interaction occurs in the nucleus in a RNA-independent manner, decreases in presence of single-stranded poly(A) RNA-oligomer and in a p38 MAPK-dependent-manner and inhibits nuclear poly(A) tail synthesis. Interacts with PAN2. Interacts (via C3H1-type zinc finger domains) with PKM. Interacts (via C3H1-type zinc finger domains) with nuclear RNA poly(A) polymerase. Interacts with PPP2CA; this interaction occurs in LPS-stimulated cells and induces ZFP36 dephosphorylation, and hence may promote ARE-containing mRNAs decay. Interacts (via C-terminus) with PRR5L (via C-terminus); this interaction may accelerate ZFP36-mediated mRNA decay during stress. Interacts (via C-terminus) with SFN; this interaction occurs in a phosphorylation-dependent manner. Interacts (via extreme C-terminal region) with SH3KBP1/CIN85 (via SH3 domains); this interaction enhances MAP3K4-induced phosphorylation of ZFP36 at Ser-66 and Ser-93 and does not alter neither ZFP36 binding to ARE-containing transcripts nor TNF-alpha mRNA decay. Interacts with XRN1. Interacts (via C-terminus and Ser-186 phosphorylated form) with YWHAB; this interaction occurs in a p38/MAPKAPK2-dependent manner, increases cytoplasmic localization of ZFP36 and protects ZFP36 from Ser-186 dephosphorylation by serine/threonine phosphatase 2A, and hence may be crucial for stabilizing ARE-containing mRNAs. Interacts (via phosphorylated form) with YWHAE. Interacts (via C-terminus) with YWHAG; this interaction occurs in a phosphorylation-dependent manner. Interacts with YWHAH; this interaction occurs in a phosphorylation-dependent manner. Interacts with YWHAQ; this interaction occurs in a phosphorylation-dependent manner. Interacts with (via C-terminus) YWHAZ; this interaction occurs in a phosphorylation-dependent manner. Interacts (via P-P-P-P-G repeats) with GIGYF2; the interaction is direct. (Microbial infection) Interacts (via C-terminus) with HTLV-1 TAX (via C-terminus); this interaction inhibits HTLV-1 TAX to transactivate viral long terminal repeat (LTR) promoter. In terms of processing, phosphorylated. Phosphorylation at serine and/or threonine residues occurs in a p38 MAPK- and MAPKAPK2-dependent manner. Phosphorylated by MAPKAPK2 at Ser-60 and Ser-186; phosphorylation increases its stability and cytoplasmic localization, promotes binding to 14-3-3 adapter proteins and inhibits the recruitment of cytoplasmic CCR4-NOT and PAN2-PAN3 deadenylase complexes to the mRNA decay machinery, thereby inhibiting ZFP36-induced ARE-containing mRNA deadenylation and decay processes. Phosphorylation by MAPKAPK2 does not impair ARE-containing RNA-binding. Phosphorylated in a MAPKAPK2- and p38 MAPK-dependent manner upon skeletal muscle satellite cell activation; this phosphorylation inhibits ZFP36-mediated mRNA decay activity, and hence stabilizes MYOD1 mRNA. Phosphorylated by MAPK1 upon mitogen stimulation. Phosphorylated at Ser-66 and Ser-93; these phosphorylations increase in a SH3KBP1-dependent manner. Phosphorylated at serine and threonine residues in a pyruvate kinase PKM- and p38 MAPK-dependent manner. Phosphorylation at Ser-60 may participate in the PKM-mediated degradation of ZFP36 in a p38 MAPK-dependent manner. Dephosphorylated by serine/threonine phosphatase 2A at Ser-186. Ubiquitinated; pyruvate kinase (PKM)-dependent ubiquitination leads to proteasomal degradation through a p38 MAPK signaling pathway. Expressed in both basal and suprabasal epidermal layers. Expressed in epidermal keratinocytes. Expressed strongly in mature dendritic cells. Expressed in immature dendritic cells (at protein level).

It localises to the nucleus. Its subcellular location is the cytoplasm. The protein localises to the cytoplasmic granule. The protein resides in the P-body. Its function is as follows. Zinc-finger RNA-binding protein that destabilizes several cytoplasmic AU-rich element (ARE)-containing mRNA transcripts by promoting their poly(A) tail removal or deadenylation, and hence provide a mechanism for attenuating protein synthesis. Acts as an 3'-untranslated region (UTR) ARE mRNA-binding adapter protein to communicate signaling events to the mRNA decay machinery. Recruits deadenylase CNOT7 (and probably the CCR4-NOT complex) via association with CNOT1, and hence promotes ARE-mediated mRNA deadenylation. Functions also by recruiting components of the cytoplasmic RNA decay machinery to the bound ARE-containing mRNAs. Self regulates by destabilizing its own mRNA. Binds to 3'-UTR ARE of numerous mRNAs and of its own mRNA. Plays a role in anti-inflammatory responses; suppresses tumor necrosis factor (TNF)-alpha production by stimulating ARE-mediated TNF-alpha mRNA decay and several other inflammatory ARE-containing mRNAs in interferon (IFN)- and/or lipopolysaccharide (LPS)-induced macrophages. Also plays a role in the regulation of dendritic cell maturation at the post-transcriptional level, and hence operates as part of a negative feedback loop to limit the inflammatory response. Promotes ARE-mediated mRNA decay of hypoxia-inducible factor HIF1A mRNA during the response of endothelial cells to hypoxia. Positively regulates early adipogenesis of preadipocytes by promoting ARE-mediated mRNA decay of immediate early genes (IEGs). Negatively regulates hematopoietic/erythroid cell differentiation by promoting ARE-mediated mRNA decay of the transcription factor STAT5B mRNA. Plays a role in maintaining skeletal muscle satellite cell quiescence by promoting ARE-mediated mRNA decay of the myogenic determination factor MYOD1 mRNA. Associates also with and regulates the expression of non-ARE-containing target mRNAs at the post-transcriptional level, such as MHC class I mRNAs. Participates in association with argonaute RISC catalytic components in the ARE-mediated mRNA decay mechanism; assists microRNA (miRNA) targeting ARE-containing mRNAs. May also play a role in the regulation of cytoplasmic mRNA decapping; enhances decapping of ARE-containing RNAs, in vitro. Involved in the delivery of target ARE-mRNAs to processing bodies (PBs). In addition to its cytosolic mRNA-decay function, affects nuclear pre-mRNA processing. Negatively regulates nuclear poly(A)-binding protein PABPN1-stimulated polyadenylation activity on ARE-containing pre-mRNA during LPS-stimulated macrophages. Also involved in the regulation of stress granule (SG) and P-body (PB) formation and fusion. Plays a role in the regulation of keratinocyte proliferation, differentiation and apoptosis. Plays a role as a tumor suppressor by inhibiting cell proliferation in breast cancer cells. Functionally, (Microbial infection) Negatively regulates HTLV-1 TAX-dependent transactivation of viral long terminal repeat (LTR) promoter. The chain is mRNA decay activator protein ZFP36 from Homo sapiens (Human).